A 93-amino-acid chain; its full sequence is YcgL domain-containing protein swp_2294 (93 aa).

In terms of domain architecture, YcgL spans 1 to 85 (MICAVYKSLR…PVVNLLEQHK (85 aa)).

The polypeptide is YcgL domain-containing protein swp_2294 (Shewanella piezotolerans (strain WP3 / JCM 13877)).